The primary structure comprises 471 residues: Trigger factor (471 aa).

The 80-residue stretch at 166–245 (DDFITIDINA…LTAVKVRELP (80 aa)) folds into the PPIase FKBP-type domain. A disordered region spans residues 442 to 471 (AAGVTGEDDDTEAEEERVTVSADDPGAARF). Over residues 447–456 (GEDDDTEAEE) the composition is skewed to acidic residues.

It belongs to the FKBP-type PPIase family. Tig subfamily.

The protein localises to the cytoplasm. It carries out the reaction [protein]-peptidylproline (omega=180) = [protein]-peptidylproline (omega=0). Involved in protein export. Acts as a chaperone by maintaining the newly synthesized protein in an open conformation. Functions as a peptidyl-prolyl cis-trans isomerase. This Renibacterium salmoninarum (strain ATCC 33209 / DSM 20767 / JCM 11484 / NBRC 15589 / NCIMB 2235) protein is Trigger factor.